The chain runs to 279 residues: Undecaprenyl-diphosphatase (279 aa).

Helical transmembrane passes span 10-30, 48-68, 96-116, 128-148, 203-223, 229-249, and 259-279; these read FICF…FLPI, LGVS…IYYF, LFLY…LIKL, GLFS…LSEI, SFLV…FSLF, IDII…IFAI, and NNTL…LTTL.

This sequence belongs to the UppP family.

It localises to the cell inner membrane. It carries out the reaction di-trans,octa-cis-undecaprenyl diphosphate + H2O = di-trans,octa-cis-undecaprenyl phosphate + phosphate + H(+). Functionally, catalyzes the dephosphorylation of undecaprenyl diphosphate (UPP). Confers resistance to bacitracin. The protein is Undecaprenyl-diphosphatase of Prochlorococcus marinus (strain NATL2A).